We begin with the raw amino-acid sequence, 349 residues long: D-arabinose 1-dehydrogenase (NADP(+)) (349 aa).

Zn(2+) is bound by residues C46, H70, D99, C102, C105, C113, and D155.

This sequence belongs to the zinc-containing alcohol dehydrogenase family. In terms of assembly, homotetramer. Dimer of dimers. Zn(2+) is required as a cofactor.

It catalyses the reaction D-arabinose + NADP(+) = D-arabinono-1,4-lactone + NADPH + H(+). Participates in a pentose oxidation pathway that converts D-arabinose to 2-oxoglutarate. Catalyzes the NADP-dependent conversion of D-arabinose to D-arabinono-1,4-lactone. In vitro, can also use L-fucose, L-galactose and D-ribose. Shows highest activity with L-fucose, in combinaison with NAD, and lower activity toward L-galactose and D-ribose. When acting on its physiological substrate, D-arabinose, shows a clear preference for NADP over NAD. This Saccharolobus solfataricus (strain ATCC 35092 / DSM 1617 / JCM 11322 / P2) (Sulfolobus solfataricus) protein is D-arabinose 1-dehydrogenase (NADP(+)).